A 163-amino-acid chain; its full sequence is MPSFDIVSEVDLQEARNGVDNAVREVESRFDFRGVEATIELNDANKTIKVLSESDFQVNQLLDILRAKLLKRGIEGASLDVSDEFVHSGKTWYVEAKLKQGIESAVQKKIVKLIKDSKLKVQAQIQGEEIRVTGKSRDDLQSVMALVRGGDLGQPFQFKNFRD.

The protein belongs to the YajQ family.

Functionally, nucleotide-binding protein. This chain is Nucleotide-binding protein YajQ, found in Salmonella heidelberg (strain SL476).